The following is a 380-amino-acid chain: Succinyl-diaminopimelate desuccinylase (380 aa).

Zn(2+) is bound at residue histidine 69. Aspartate 71 is a catalytic residue. Position 102 (aspartate 102) interacts with Zn(2+). Catalysis depends on glutamate 135, which acts as the Proton acceptor. 3 residues coordinate Zn(2+): glutamate 136, glutamate 164, and histidine 353.

This sequence belongs to the peptidase M20A family. DapE subfamily. As to quaternary structure, homodimer. Zn(2+) is required as a cofactor. It depends on Co(2+) as a cofactor.

The enzyme catalyses N-succinyl-(2S,6S)-2,6-diaminopimelate + H2O = (2S,6S)-2,6-diaminopimelate + succinate. Its pathway is amino-acid biosynthesis; L-lysine biosynthesis via DAP pathway; LL-2,6-diaminopimelate from (S)-tetrahydrodipicolinate (succinylase route): step 3/3. Catalyzes the hydrolysis of N-succinyl-L,L-diaminopimelic acid (SDAP), forming succinate and LL-2,6-diaminopimelate (DAP), an intermediate involved in the bacterial biosynthesis of lysine and meso-diaminopimelic acid, an essential component of bacterial cell walls. The chain is Succinyl-diaminopimelate desuccinylase from Cereibacter sphaeroides (strain ATCC 17025 / ATH 2.4.3) (Rhodobacter sphaeroides).